A 259-amino-acid polypeptide reads, in one-letter code: Glucosamine-6-phosphate deaminase (259 aa).

Asp-66 serves as the catalytic Proton acceptor; for enolization step. The active-site For ring-opening step is the Asp-135. His-137 serves as the catalytic Proton acceptor; for ring-opening step. Catalysis depends on Glu-142, which acts as the For ring-opening step.

It belongs to the glucosamine/galactosamine-6-phosphate isomerase family. NagB subfamily.

The enzyme catalyses alpha-D-glucosamine 6-phosphate + H2O = beta-D-fructose 6-phosphate + NH4(+). It functions in the pathway amino-sugar metabolism; N-acetylneuraminate degradation; D-fructose 6-phosphate from N-acetylneuraminate: step 5/5. Functionally, catalyzes the reversible isomerization-deamination of glucosamine 6-phosphate (GlcN6P) to form fructose 6-phosphate (Fru6P) and ammonium ion. The sequence is that of Glucosamine-6-phosphate deaminase from Rhodococcus jostii (strain RHA1).